The primary structure comprises 101 residues: Putative fatty acid-binding protein 5-like protein 3 (101 aa).

This sequence belongs to the calycin superfamily. Fatty-acid binding protein (FABP) family.

In terms of biological role, high specificity for fatty acids. The chain is Putative fatty acid-binding protein 5-like protein 3 (FABP5P3) from Homo sapiens (Human).